The primary structure comprises 125 residues: Prefoldin subunit beta (125 aa).

The protein belongs to the prefoldin subunit beta family. In terms of assembly, heterohexamer of two alpha and four beta subunits.

It is found in the cytoplasm. In terms of biological role, molecular chaperone capable of stabilizing a range of proteins. Seems to fulfill an ATP-independent, HSP70-like function in archaeal de novo protein folding. In Halobacterium salinarum (strain ATCC 29341 / DSM 671 / R1), this protein is Prefoldin subunit beta.